The chain runs to 181 residues: Trafficking protein particle complex subunit 3-like protein (181 aa).

The S-palmitoyl cysteine moiety is linked to residue Cys68.

It belongs to the TRAPP small subunits family. BET3 subfamily. As to quaternary structure, homodimer. Component of the multisubunit TRAPP (transport protein particle) complex, which includes at least TRAPPC2, TRAPPC2L, TRAPPC3, TRAPPC3L, TRAPPC4, TRAPPC5, TRAPPC8, TRAPPC9, TRAPPC10, TRAPPC11 and TRAPPC12.

The protein localises to the golgi apparatus. Its subcellular location is the cis-Golgi network. The protein resides in the endoplasmic reticulum. May play a role in vesicular transport from endoplasmic reticulum to Golgi. This chain is Trafficking protein particle complex subunit 3-like protein (Trappc3l), found in Mus musculus (Mouse).